Reading from the N-terminus, the 679-residue chain is Glycine--tRNA ligase beta subunit (679 aa).

The protein belongs to the class-II aminoacyl-tRNA synthetase family. Tetramer of two alpha and two beta subunits.

The protein resides in the cytoplasm. The catalysed reaction is tRNA(Gly) + glycine + ATP = glycyl-tRNA(Gly) + AMP + diphosphate. The sequence is that of Glycine--tRNA ligase beta subunit from Streptococcus agalactiae serotype V (strain ATCC BAA-611 / 2603 V/R).